Here is a 226-residue protein sequence, read N- to C-terminus: Protein transport protein sec20 (226 aa).

Over 1–189 (MADVLNALEE…IKSLKLSDRS (189 aa)) the chain is Cytoplasmic. Residues 53-75 (LRYEKAVQEYIRLNRRYRNKIAS) adopt a coiled-coil conformation. Ser-97 carries the phosphoserine modification. A helical; Anchor for type IV membrane protein membrane pass occupies residues 190–210 (DYFLVVSGFGFFIFVVVYLLF). At 211 to 226 (KRIVWPILSMFLWFLR) the chain is on the lumenal side.

This sequence belongs to the SEC20 family. As to quaternary structure, component of a SNARE complex consisting of ufe1, sec20, sec22 and use1. Interacts with tip20 through its cytoplasmic domain.

The protein localises to the endoplasmic reticulum membrane. SNARE required for targeting and fusion of Golgi-derived retrograde transport vesicles with the ER. The chain is Protein transport protein sec20 from Schizosaccharomyces pombe (strain 972 / ATCC 24843) (Fission yeast).